A 542-amino-acid chain; its full sequence is MAAKEVRFSDDARHRMLAGVNILADAVKQTLGPKGRNVVLEKSFGAPVVTKDGVSVAKEIELKDKFENMGAQMVKEVASKTSDVAGDGTTTATVLAQAIVREGLKSVAAGANPMDIKRGIDQAVGVVVEELKKLSKPCTDSKAIAQVGTISANSDESIGQIIAQAMDTVGKEGVITVEEGSGLQNELDVVEGMQFDRGYLSPYFINKQDTMGVELENPYVLLHDKKISSIRDLLPVLEKTAKAGRSLLIIAEDVDGEALATLVVNNMRGILKVCAVKAPGFGDRRKAMLEDIAILTGGQVISEELGLSLEKVELTDLGQAKKIQINKETTTIVDGAGSADAIKARVEQIRKQIEDTTSDYDREKLQERVAKLAGGVAVIKVGAATEVEMKEKKARVEDALHATRAAVEEGIVPGGGVALIRAQQALKTLEGKNHDQTVGIAILRRAIEEPLRQIVANAGEEPSVVLAKVQEGTGTFGYNAGTAEYGDMIEMGILDPTKVTRSALQNAASVAGLMLTTEAMVAEMPKKEKGGMPAGGGMDDMM.

ATP-binding positions include 30–33 (TLGP), Lys-51, 87–91 (DGTTT), Gly-415, and Asp-495.

The protein belongs to the chaperonin (HSP60) family. As to quaternary structure, forms a cylinder of 14 subunits composed of two heptameric rings stacked back-to-back. Interacts with the co-chaperonin GroES.

It is found in the cytoplasm. The catalysed reaction is ATP + H2O + a folded polypeptide = ADP + phosphate + an unfolded polypeptide.. Its function is as follows. Together with its co-chaperonin GroES, plays an essential role in assisting protein folding. The GroEL-GroES system forms a nano-cage that allows encapsulation of the non-native substrate proteins and provides a physical environment optimized to promote and accelerate protein folding. In Methylococcus capsulatus (strain ATCC 33009 / NCIMB 11132 / Bath), this protein is Chaperonin GroEL 2.